The sequence spans 1265 residues: 1-phosphatidylinositol 4,5-bisphosphate phosphodiesterase gamma-2 (1265 aa).

The PH domain maps to 20 to 131; the sequence is RALELGTVMT…WLSGLKILHQ (112 aa). The PI-PLC X-box domain occupies 312–456; sequence QDMNNPLSHY…LREKIIIKHK (145 aa). Residues histidine 327 and histidine 372 contribute to the active site. SH2 domains are found at residues 532–635 and 646–735; these read WFHK…TDPV and WYYD…RYPV. Residues tyrosine 753 and tyrosine 759 each carry the phosphotyrosine; by BTK modification. Residues 769–829 enclose the SH3 domain; that stretch reads MPQRTVKALY…PSNYVEDISA (61 aa). Residues 930–1044 form the PI-PLC Y-box domain; it reads LSDLVVYCKP…GYVLQPESMR (115 aa). Residues 1038–1169 form the C2 domain; it reads LQPESMRSEK…SGFRSVPLKN (132 aa). Tyrosine 1197 bears the Phosphotyrosine; by BTK mark. A phosphotyrosine mark is found at tyrosine 1217 and tyrosine 1245.

Part of a complex composed of EEIG1, TNFRSF11A/RANK, PLCG2, GAB2, TEC and BTK; complex formation increases in the presence of TNFSF11/RANKL. Interacts (via SH2 domain) with CSF1R (tyrosine phosphorylated). Interacts constitutively with THEMIS2. It depends on Ca(2+) as a cofactor. In terms of processing, phosphorylated on tyrosine residues by CSF1R. Phosphorylated on tyrosine residues by BTK and SYK; upon ligand-induced activation of a variety of growth factor receptors and immune system receptors. Phosphorylation leads to increased phospholipase activity.

The protein localises to the membrane raft. The enzyme catalyses a 1,2-diacyl-sn-glycero-3-phospho-(1D-myo-inositol-4,5-bisphosphate) + H2O = 1D-myo-inositol 1,4,5-trisphosphate + a 1,2-diacyl-sn-glycerol + H(+). In terms of biological role, the production of the second messenger molecules diacylglycerol (DAG) and inositol 1,4,5-trisphosphate (IP3) is mediated by activated phosphatidylinositol-specific phospholipase C enzymes. It is a crucial enzyme in transmembrane signaling. This chain is 1-phosphatidylinositol 4,5-bisphosphate phosphodiesterase gamma-2, found in Rattus norvegicus (Rat).